Reading from the N-terminus, the 333-residue chain is MNKQDVTIYDVAREAKVSMATVSRVVNGNNNVRKETRDRVMEVIKRLHYQPNAVAQGLASKRTTTVGLIVPDLTNLYFAELSKGIDDIAVLYKYNIIISSVENRLMKEDAVIQGLLNKQVDGVIYMSNKLSEEAAEAFKRTDTPVVLAGTVSDNLEFPSVNIDYKKADTEALNLLLNDGKKKLALIVGDKEASINRNYRIPAFEKFVADNELEGCEIFDNIKDYSDGYNLYPELAKKGINGAIITKDVSSVGLLNSALDRGAKVPEDFEIITASATQIASVVRPALTTIKQPLYDLGAVAMRMLTKLMNDESLEDKHIILPYELIKKQSTLNK.

The region spanning 6–60 (VTIYDVAREAKVSMATVSRVVNGNNNVRKETRDRVMEVIKRLHYQPNAVAQGLAS) is the HTH lacI-type domain. Positions 8–27 (IYDVAREAKVSMATVSRVVN) form a DNA-binding region, H-T-H motif.

Transcriptional regulator of the pepQ gene for prolidase. The polypeptide is HTH-type transcriptional regulator pepR1 (pepR1) (Lactobacillus delbrueckii subsp. lactis).